A 149-amino-acid chain; its full sequence is Calmodulin (149 aa).

A2 bears the N-acetylalanine mark. 4 EF-hand domains span residues 8–43 (EQIA…LGQN), 44–79 (PTEA…KMKD), 81–116 (DSEE…LGEK), and 117–149 (LTDE…MTAK). The Ca(2+) site is built by D21, D23, D25, T27, E32, D57, D59, N61, T63, E68, D94, D96, N98, Y100, and E105. An N6,N6,N6-trimethyllysine modification is found at K116. The Ca(2+) site is built by D130, D132, D134, Q136, and E141.

It belongs to the calmodulin family.

Calmodulin acts as part of a calcium signal transduction pathway by mediating the control of a large number of enzymes, ion channels, aquaporins and other proteins through calcium-binding. Calcium-binding is required for the activation of calmodulin. Among the enzymes to be stimulated by the calmodulin-calcium complex are a number of protein kinases, such as myosin light-chain kinases and calmodulin-dependent protein kinase type II (CaMK2), and phosphatases. This chain is Calmodulin (calm), found in Electrophorus electricus (Electric eel).